Consider the following 193-residue polypeptide: dCTP deaminase (193 aa).

Residues 110-115 (RSSLAR), Asp-128, 136-138 (VLE), Tyr-171, Lys-178, and Gln-182 each bind dCTP. Glu-138 (proton donor/acceptor) is an active-site residue. Positions 169–193 (RPYNRREDAKYRNQQGAVASRIDKD) are disordered.

Belongs to the dCTP deaminase family. As to quaternary structure, homotrimer.

It catalyses the reaction dCTP + H2O + H(+) = dUTP + NH4(+). Its pathway is pyrimidine metabolism; dUMP biosynthesis; dUMP from dCTP (dUTP route): step 1/2. Functionally, catalyzes the deamination of dCTP to dUTP. The protein is dCTP deaminase of Escherichia coli O1:K1 / APEC.